The following is a 115-amino-acid chain: Aspartate 1-decarboxylase (115 aa).

The active-site Schiff-base intermediate with substrate; via pyruvic acid is S25. A Pyruvic acid (Ser) modification is found at S25. T57 provides a ligand contact to substrate. Y58 acts as the Proton donor in catalysis. 73–75 (GPA) is a binding site for substrate.

This sequence belongs to the PanD family. In terms of assembly, heterooctamer of four alpha and four beta subunits. Pyruvate is required as a cofactor. Is synthesized initially as an inactive proenzyme, which is activated by self-cleavage at a specific serine bond to produce a beta-subunit with a hydroxyl group at its C-terminus and an alpha-subunit with a pyruvoyl group at its N-terminus.

It is found in the cytoplasm. The catalysed reaction is L-aspartate + H(+) = beta-alanine + CO2. Its pathway is cofactor biosynthesis; (R)-pantothenate biosynthesis; beta-alanine from L-aspartate: step 1/1. Its function is as follows. Catalyzes the pyruvoyl-dependent decarboxylation of aspartate to produce beta-alanine. The polypeptide is Aspartate 1-decarboxylase (Cytophaga hutchinsonii (strain ATCC 33406 / DSM 1761 / CIP 103989 / NBRC 15051 / NCIMB 9469 / D465)).